The sequence spans 360 residues: Probable nuclear hormone receptor HR38 (360 aa).

Positions 1 to 21 (GSSSPGVAPADNTGPRAAPSS) are disordered. A DNA-binding region (nuclear receptor) is located at residues 23–98 (SQLCAVCGDT…VGMVKEVVRT (76 aa)). NR C4-type zinc fingers lie at residues 26 to 46 (CAVC…CEGC) and 62 to 86 (CLAE…FQKC). Positions 122–357 (PPISLITALV…PLIENMFRAS (236 aa)) constitute an NR LBD domain.

Belongs to the nuclear hormone receptor family. NR4 subfamily. As to quaternary structure, forms a heterodimer with USP.

It localises to the nucleus. This Bombyx mori (Silk moth) protein is Probable nuclear hormone receptor HR38 (HR38).